The primary structure comprises 451 residues: uncharacterized protein (451 aa).

Mn(2+) contacts are provided by Asp305, Asp316, His384, Glu414, and Glu428.

This sequence belongs to the peptidase M24B family. The cofactor is Mn(2+).

This is an uncharacterized protein from Schizosaccharomyces pombe (strain 972 / ATCC 24843) (Fission yeast).